The chain runs to 326 residues: MALTEQKRVRLEKLSDENGIISALAFDQRGALKRLMAQHQTEEPTVAQMEELKVLVADELTKYASSMLLDPEYGLPATKALDEKAGLLLAYEKTGYDTTSTKRLPDCLDVWSAKRIKEEGADAVKFLLYYDVDSSDELNQEKQAYIERIGSECVAEDIPFFLEILAYDEKIADAGSVEYAKVKPHKVIGAMKVFSDPRFNIDVLKVEVPVNIKYVEGFAEGEVVYTREEAAAFFKAQDEATNFPYIYLSAGVSAKLFQDTLVFAHESGANFNGVLCGRATWAGSVEAYIKDGEAAAREWLRTTGFENIDELNKVLQTTATSWKERV.

Belongs to the aldolase LacD family.

The catalysed reaction is D-tagatofuranose 1,6-bisphosphate = D-glyceraldehyde 3-phosphate + dihydroxyacetone phosphate. It functions in the pathway carbohydrate metabolism; D-tagatose 6-phosphate degradation; D-glyceraldehyde 3-phosphate and glycerone phosphate from D-tagatose 6-phosphate: step 2/2. This is Tagatose 1,6-diphosphate aldolase from Streptococcus pneumoniae (strain ATCC BAA-255 / R6).